Consider the following 187-residue polypeptide: UPF0340 protein SPP_0683 (187 aa).

Belongs to the UPF0340 family.

This Streptococcus pneumoniae (strain P1031) protein is UPF0340 protein SPP_0683.